A 425-amino-acid chain; its full sequence is UDP-N-acetylglucosamine 1-carboxyvinyltransferase (425 aa).

A phosphoenolpyruvate-binding site is contributed by 22–23; sequence KN. Arg98 serves as a coordination point for UDP-N-acetyl-alpha-D-glucosamine. The active-site Proton donor is Cys122. Cys122 bears the 2-(S-cysteinyl)pyruvic acid O-phosphothioketal mark. Residues 127-131, Asp313, and Ile335 contribute to the UDP-N-acetyl-alpha-D-glucosamine site; that span reads RPVDQ.

The protein belongs to the EPSP synthase family. MurA subfamily.

It is found in the cytoplasm. The enzyme catalyses phosphoenolpyruvate + UDP-N-acetyl-alpha-D-glucosamine = UDP-N-acetyl-3-O-(1-carboxyvinyl)-alpha-D-glucosamine + phosphate. The protein operates within cell wall biogenesis; peptidoglycan biosynthesis. Its function is as follows. Cell wall formation. Adds enolpyruvyl to UDP-N-acetylglucosamine. The polypeptide is UDP-N-acetylglucosamine 1-carboxyvinyltransferase (Xylella fastidiosa (strain M23)).